A 98-amino-acid chain; its full sequence is NADH-ubiquinone oxidoreductase chain 4L (98 aa).

3 helical membrane-spanning segments follow: residues 1-21 (MPSI…GMLV), 29-49 (SLLC…LTAL), and 61-81 (IILL…LVMV).

It belongs to the complex I subunit 4L family. In terms of assembly, core subunit of respiratory chain NADH dehydrogenase (Complex I) which is composed of 45 different subunits.

It is found in the mitochondrion inner membrane. It catalyses the reaction a ubiquinone + NADH + 5 H(+)(in) = a ubiquinol + NAD(+) + 4 H(+)(out). Its function is as follows. Core subunit of the mitochondrial membrane respiratory chain NADH dehydrogenase (Complex I) which catalyzes electron transfer from NADH through the respiratory chain, using ubiquinone as an electron acceptor. Part of the enzyme membrane arm which is embedded in the lipid bilayer and involved in proton translocation. The protein is NADH-ubiquinone oxidoreductase chain 4L (MT-ND4L) of Oryctolagus cuniculus (Rabbit).